A 479-amino-acid polypeptide reads, in one-letter code: Long-chain acyl-protein thioester reductase (479 aa).

Belongs to the LuxC family.

The enzyme catalyses a long-chain fatty aldehyde + NADP(+) + CoA = a long-chain fatty acyl-CoA + NADPH + H(+). It functions in the pathway lipid metabolism; fatty acid reduction for biolumincescence. LuxC is the fatty acid reductase enzyme responsible for synthesis of the aldehyde substrate for the luminescent reaction catalyzed by luciferase. The chain is Long-chain acyl-protein thioester reductase (luxC) from Aliivibrio fischeri (Vibrio fischeri).